A 218-amino-acid polypeptide reads, in one-letter code: Octanoyltransferase (218 aa).

Residues 31–206 (EETPDEVWLV…ELVNLLGYEQ (176 aa)) enclose the BPL/LPL catalytic domain. Substrate contacts are provided by residues 70–77 (RGGQVTYH), 137–139 (SLG), and 150–152 (GLA). The active-site Acyl-thioester intermediate is cysteine 168.

The protein belongs to the LipB family.

It is found in the cytoplasm. It carries out the reaction octanoyl-[ACP] + L-lysyl-[protein] = N(6)-octanoyl-L-lysyl-[protein] + holo-[ACP] + H(+). The protein operates within protein modification; protein lipoylation via endogenous pathway; protein N(6)-(lipoyl)lysine from octanoyl-[acyl-carrier-protein]: step 1/2. Functionally, catalyzes the transfer of endogenously produced octanoic acid from octanoyl-acyl-carrier-protein onto the lipoyl domains of lipoate-dependent enzymes. Lipoyl-ACP can also act as a substrate although octanoyl-ACP is likely to be the physiological substrate. The protein is Octanoyltransferase of Vibrio vulnificus (strain CMCP6).